A 153-amino-acid polypeptide reads, in one-letter code: SsrA-binding protein (153 aa).

It belongs to the SmpB family.

Its subcellular location is the cytoplasm. Functionally, required for rescue of stalled ribosomes mediated by trans-translation. Binds to transfer-messenger RNA (tmRNA), required for stable association of tmRNA with ribosomes. tmRNA and SmpB together mimic tRNA shape, replacing the anticodon stem-loop with SmpB. tmRNA is encoded by the ssrA gene; the 2 termini fold to resemble tRNA(Ala) and it encodes a 'tag peptide', a short internal open reading frame. During trans-translation Ala-aminoacylated tmRNA acts like a tRNA, entering the A-site of stalled ribosomes, displacing the stalled mRNA. The ribosome then switches to translate the ORF on the tmRNA; the nascent peptide is terminated with the 'tag peptide' encoded by the tmRNA and targeted for degradation. The ribosome is freed to recommence translation, which seems to be the essential function of trans-translation. The protein is SsrA-binding protein of Macrococcus caseolyticus (strain JCSC5402) (Macrococcoides caseolyticum).